Here is a 121-residue protein sequence, read N- to C-terminus: Large ribosomal subunit protein bL19 (121 aa).

The protein belongs to the bacterial ribosomal protein bL19 family.

Its function is as follows. This protein is located at the 30S-50S ribosomal subunit interface and may play a role in the structure and function of the aminoacyl-tRNA binding site. The chain is Large ribosomal subunit protein bL19 from Borreliella burgdorferi (strain ZS7) (Borrelia burgdorferi).